The chain runs to 247 residues: Bax inhibitor 1 (247 aa).

Position 1 is an N-acetylmethionine (Met1). 6 consecutive transmembrane segments (helical) span residues 58 to 78 (VLWN…MIWL), 92 to 112 (LLFV…KVAI), 118 to 138 (ILIT…AAAM), 145 to 165 (YLYL…LQFA), 173 to 193 (ASIF…YMVV), and 212 to 232 (HSLT…IIML).

This sequence belongs to the BI1 family. In terms of assembly, interacts (via C-terminus) with calmodulin, CYTB5-B and CYTB5-D. Interacts indirectly with FAH1 via CYTB5-D. Expressed in root tips, root vasculature, flower tissues, including stamens and sepals, and in the base of siliques. Not detected in mature leaves.

It is found in the endoplasmic reticulum membrane. Its function is as follows. Suppressor of apoptosis. Modulator of endoplasmic reticulum stress-mediated programmed cell death. Involved in methyl jasmonate-induced leaf senescence through regulating cytoplasmic calcium level. The chain is Bax inhibitor 1 (BI-1) from Arabidopsis thaliana (Mouse-ear cress).